Reading from the N-terminus, the 254-residue chain is Galactitol 2-dehydrogenase (L-tagatose-forming) (254 aa).

NAD(+) contacts are provided by residues 21 to 23 (SGI), D42, 66 to 67 (DV), Y159, K163, and 192 to 194 (VAT). Catalysis depends on Y159, which acts as the Proton acceptor. W254 is a Mg(2+) binding site.

Belongs to the short-chain dehydrogenases/reductases (SDR) family. As to quaternary structure, homotetramer. A divalent metal cation is required as a cofactor.

It catalyses the reaction galactitol + NAD(+) = keto-L-tagatose + NADH + H(+). Inhibited by the chelating agents EDTA and alpha,alpha'-dipyridyl. Inhibited by Zn(2+) and Fe(2+). Catalyzes the interconversion of galactitol to the rare sugar L-tagatose. Shows activity with a wide range of substrates, and catalyzes the oxidation of a variety of polyvalent aliphatic alcohols and polyols to the corresponding ketones and ketoses, respectively, and in the reverse reaction, it reduces ketones with high stereoselectivity yielding the corresponding S-configurated alcohols. Shows high activity with D-threitol, xylitol, 1,2-hexanediol, 1,2-pentanediol, 2-hexanol, L-erythrulose, D-ribulose and acetoin. Specific for NAD(+). This chain is Galactitol 2-dehydrogenase (L-tagatose-forming), found in Cereibacter sphaeroides (Rhodobacter sphaeroides).